Reading from the N-terminus, the 278-residue chain is Ras-related protein Rab-40B (278 aa).

Residues serine 23, glycine 26, and lysine 27 each contribute to the GTP site. Residues 41-49 (SPYGHPAGI) are switch-I. A Mg(2+)-binding site is contributed by aspartate 69. Residues glycine 72, asparagine 126, and arginine 127 each coordinate GTP. The segment at 72-88 (GQGRFCTIFRSYSRGAQ) is switch-II. The 54-residue stretch at 175–228 (LLRHGMDRLWRPSKVLSLQDLCCRAVVSCTPVHLVDKLPLPIALRSHLKSFSMA) folds into the SOCS box domain. The segment at 242 to 278 (SLTTSSTHKRSSLRKVKLVRPPQSPPKNCTRNSCKIS) is disordered. A compositionally biased stretch (basic residues) spans 248 to 259 (THKRSSLRKVKL). Polar residues predominate over residues 267-278 (PKNCTRNSCKIS). Cysteine 270 carries S-palmitoyl cysteine lipidation. A lipid anchor (S-geranylgeranyl cysteine) is attached at cysteine 275.

It belongs to the small GTPase superfamily. Rab family. Component of the cullin-5-RING E3 ubiquitin-protein ligase complex (ECS(RAB40B) complex) composed of CUL5, Elongin BC (ELOB and ELOC), RNF7/RBX2 and RAB40B; RAB40B interaction with ECS complex is GTP-independent. Binds (GTP-bound) LIMA1; interaction promotes LIMA1 subcellular localization in lamellipodia during cell migration. Interacts (GTP-bound) with TKS5/SH3PXD2A (via PX domain); interaction promotes invadopodia-mediated extracellular matrix degradation. It depends on Mg(2+) as a cofactor.

It localises to the cell membrane. The protein resides in the cytoplasm. It is found in the cytosol. Its subcellular location is the cell projection. The protein localises to the lamellipodium membrane. It localises to the ruffle. The enzyme catalyses GTP + H2O = GDP + phosphate + H(+). The protein operates within protein modification; protein ubiquitination. Its activity is regulated as follows. Regulated by guanine nucleotide exchange factors (GEFs) which promote the exchange of bound GDP for free GTP. Regulated by GTPase activating proteins (GAPs) which increase the GTP hydrolysis activity. Inhibited by GDP dissociation inhibitors (GDIs). In terms of biological role, RAB40B small GTPase acts as substrate-recognition components of the ECS(RAB40B) E3 ubiquitin ligase complex which mediates the ubiquitination of target proteins. The Rab40 subfamily belongs to the Rab family that are key regulators of intracellular membrane trafficking, from the formation of transport vesicles to their fusion with membranes. Rabs cycle between an inactive GDP-bound form and an active GTP-bound form that is able to recruit to membranes different sets of downstream effectors directly responsible for vesicle formation, movement, tethering and fusion. As part of the ECS(RAB40B) complex, GTP-bound RAB40B promotes LIMA1/EPLIN ubiquitination and degradation, thereby regulating leading-edge actin dynamics during cell migration. As part of the ECS(RAB40B) complex, GTP-bound RAB40B also ubiquitinates RAP2A GTPase which promotes its localization to lamellipodia and activation to drive cell migration. The ECS(RAB40B) complex does not mediate canonical ubiquitin-dependent degradation of RAP2. RAB40B also binds TKS5/SH3PXD2A effector independently from ECS complex to promote invadopodia-mediated extracellular matrix degradation. The polypeptide is Ras-related protein Rab-40B (Homo sapiens (Human)).